The primary structure comprises 311 residues: Malate dehydrogenase (311 aa).

NAD(+) contacts are provided by residues 7 to 13 (GAAGGIG) and Asp-34. Substrate is bound by residues Arg-81 and Arg-87. NAD(+) contacts are provided by residues Asn-94 and 117–119 (ITN). Asn-119 and Arg-153 together coordinate substrate. The active-site Proton acceptor is His-177. Position 227 (Met-227) interacts with NAD(+).

Belongs to the LDH/MDH superfamily. MDH type 1 family. Homodimer.

It catalyses the reaction (S)-malate + NAD(+) = oxaloacetate + NADH + H(+). Its function is as follows. Catalyzes the reversible oxidation of malate to oxaloacetate. The chain is Malate dehydrogenase from Aliivibrio fischeri (strain MJ11) (Vibrio fischeri).